The chain runs to 415 residues: Mitogen-activated protein kinase MPS1 (415 aa).

One can recognise a Protein kinase domain in the interval 23 to 314; it reads YTVTKELGQG…VEQALEHPYL (292 aa). Residues 29 to 37 and Lys52 each bind ATP; that span reads LGQGAYGIV. The interval 363 to 394 is disordered; the sequence is GAGGHGAPHAPQVPIPAGAGQGQWKAEDPRPQ.

It belongs to the protein kinase superfamily. Ser/Thr protein kinase family. MAP kinase subfamily. Interacts with transcription factor MIG1. Interacts with transcription factor SWI6. Mg(2+) is required as a cofactor.

It carries out the reaction L-seryl-[protein] + ATP = O-phospho-L-seryl-[protein] + ADP + H(+). It catalyses the reaction L-threonyl-[protein] + ATP = O-phospho-L-threonyl-[protein] + ADP + H(+). In terms of biological role, mitogen-activated protein kinase; part of the MCK1-MKK2-MPS1 MAP kinase (MAPK) signal transduction cascade that is essential for cell wall integrity and plant infection, but not for plant defense responses. Beside its role in pathogenesis, the MPS1 cascade is active in conidiation and cellular stress responses. Targets downstream of the MPS1-MAPK pathway include transcription factors MIG1 and SWI6, as well as GSK1 and MPG1. The chain is Mitogen-activated protein kinase MPS1 from Pyricularia oryzae (strain 70-15 / ATCC MYA-4617 / FGSC 8958) (Rice blast fungus).